A 132-amino-acid polypeptide reads, in one-letter code: Small ribosomal subunit protein uS8 (132 aa).

This sequence belongs to the universal ribosomal protein uS8 family. Part of the 30S ribosomal subunit. Contacts proteins S5 and S12.

One of the primary rRNA binding proteins, it binds directly to 16S rRNA central domain where it helps coordinate assembly of the platform of the 30S subunit. This chain is Small ribosomal subunit protein uS8, found in Brucella melitensis biotype 1 (strain ATCC 23456 / CCUG 17765 / NCTC 10094 / 16M).